We begin with the raw amino-acid sequence, 314 residues long: Dioxygenase easH (314 aa).

3 residues coordinate Fe cation: His141, Asp143, and His217.

This sequence belongs to the PhyH family. As to quaternary structure, homodimer. Fe cation is required as a cofactor.

It participates in alkaloid biosynthesis; ergot alkaloid biosynthesis. Dioxygenase; part of the gene cluster that mediates the biosynthesis of fungal ergot alkaloid. DmaW catalyzes the first step of ergot alkaloid biosynthesis by condensing dimethylallyl diphosphate (DMAP) and tryptophan to form 4-dimethylallyl-L-tryptophan. The second step is catalyzed by the methyltransferase easF that methylates 4-dimethylallyl-L-tryptophan in the presence of S-adenosyl-L-methionine, resulting in the formation of 4-dimethylallyl-L-abrine. The catalase easC and the FAD-dependent oxidoreductase easE then transform 4-dimethylallyl-L-abrine to chanoclavine-I which is further oxidized by easD in the presence of NAD(+), resulting in the formation of chanoclavine-I aldehyde. Agroclavine dehydrogenase easG then mediates the conversion of chanoclavine-I aldehyde to agroclavine via a non-enzymatic adduct reaction: the substrate is an iminium intermediate that is formed spontaneously from chanoclavine-I aldehyde in the presence of glutathione. The presence of easA is not required to complete this reaction. Further conversion of agroclavine to paspalic acid is a two-step process involving oxidation of agroclavine to elymoclavine and of elymoclavine to paspalic acid, the second step being performed by the elymoclavine oxidase cloA. Paspalic acid is then further converted to D-lysergic acid. Ergopeptines are assembled from D-lysergic acid and three different amino acids by the D-lysergyl-peptide-synthetases composed each of a monomudular and a trimodular nonribosomal peptide synthetase subunit. LpsB and lpsC encode the monomodular subunits responsible for D-lysergic acid activation and incorporation into the ergopeptine backbone. LpsA1 and A2 subunits encode the trimodular nonribosomal peptide synthetase assembling the tripeptide portion of ergopeptines. LpsA1 is responsible for formation of the major ergopeptine, ergotamine, and lpsA2 for alpha-ergocryptine, the minor ergopeptine of the total alkaloid mixture elaborated by C.purpurea. D-lysergyl-tripeptides are assembled by the nonribosomal peptide synthetases and released as N-(D-lysergyl-aminoacyl)-lactams. Cyclolization of the D-lysergyl-tripeptides is performed by the Fe(2+)/2-ketoglutarate-dependent dioxygenase easH which introduces a hydroxyl group into N-(D-lysergyl-aminoacyl)-lactam at alpha-C of the aminoacyl residue followed by spontaneous condensation with the terminal lactam carbonyl group. The polypeptide is Dioxygenase easH (Claviceps purpurea (strain 20.1) (Ergot fungus)).